A 335-amino-acid chain; its full sequence is Methionine import ATP-binding protein MetN 2 (335 aa).

An ABC transporter domain is found at 2–242; sequence IEFQNVHKTY…PEHPTTKRFV (241 aa). Residue 38 to 45 coordinates ATP; it reads GHSGAGKS.

It belongs to the ABC transporter superfamily. Methionine importer (TC 3.A.1.24) family. In terms of assembly, the complex is composed of two ATP-binding proteins (MetN), two transmembrane proteins (MetI) and a solute-binding protein (MetQ).

Its subcellular location is the cell inner membrane. The catalysed reaction is L-methionine(out) + ATP + H2O = L-methionine(in) + ADP + phosphate + H(+). The enzyme catalyses D-methionine(out) + ATP + H2O = D-methionine(in) + ADP + phosphate + H(+). In terms of biological role, part of the ABC transporter complex MetNIQ involved in methionine import. Responsible for energy coupling to the transport system. This Pseudomonas entomophila (strain L48) protein is Methionine import ATP-binding protein MetN 2.